Reading from the N-terminus, the 294-residue chain is Histone deacetylase HDT3 (294 aa).

Methionine 1 is subject to N-acetylmethionine. The tract at residues 2 to 5 (EFWG) is required to repress transcription. The segment at 124-269 (QVNFQLPNED…TPKSAGAFGC (146 aa)) is disordered. Residues 140 to 188 (DDADGSEEDSSDDDDSENSGDEEEEKVTAESDSEEDDSSDDEEDDSSEE) show a composition bias toward acidic residues. Positions 189–202 (ETPKKPEEPKKRSA) are enriched in basic and acidic residues. Positions 203 to 213 (EPNSSKNPASN) are enriched in low complexity. Polar residues predominate over residues 252-262 (GETSKQQQTPK). A C2H2-type zinc finger spans residues 267 to 290 (FGCKSCTRTFTSEMGLQSHTKAKH).

This sequence belongs to the histone deacetylase HD2 family. As to quaternary structure, interacts with DNMT2. Expressed in leaves, roots, stems, young plantlets, flowers and siliques. Highest levels in ovules, embryos, shoot apical meristems and first leaves. Also expressed in somatic embryos.

Its subcellular location is the nucleus. It is found in the nucleolus. Probably mediates the deacetylation of lysine residues on the N-terminal part of the core histones (H2A, H2B, H3 and H4). Histone deacetylation gives a tag for epigenetic repression and plays an important role in transcriptional regulation, cell cycle progression and developmental events. Involved in the modulation of abscisic acid and stress-responsive genes. This Arabidopsis thaliana (Mouse-ear cress) protein is Histone deacetylase HDT3 (HDT3).